Reading from the N-terminus, the 310-residue chain is Homoserine kinase (310 aa).

Residue 91–101 (PIGSGLGSSAC) participates in ATP binding.

Belongs to the GHMP kinase family. Homoserine kinase subfamily.

Its subcellular location is the cytoplasm. It catalyses the reaction L-homoserine + ATP = O-phospho-L-homoserine + ADP + H(+). It participates in amino-acid biosynthesis; L-threonine biosynthesis; L-threonine from L-aspartate: step 4/5. Functionally, catalyzes the ATP-dependent phosphorylation of L-homoserine to L-homoserine phosphate. In Escherichia coli O157:H7, this protein is Homoserine kinase.